Here is a 528-residue protein sequence, read N- to C-terminus: Atypical kinase COQ8B, mitochondrial (528 aa).

Residues 93-109 (LASFGGLAVGLGLGALA) form a helical membrane-spanning segment. A KxGQ motif motif is present at residues 151–154 (KIGQ). The 233-residue stretch at 187–419 (MMKVLEEELG…DRVLQKSQDL (233 aa)) folds into the Protein kinase domain. The AAAS motif motif lies at 212 to 215 (AAAS). Residues S215, K233, and 320 to 323 (MELA) contribute to the ATP site. The active-site Proton acceptor is D363. Positions 368 and 382 each coordinate ATP.

It belongs to the protein kinase superfamily. ADCK protein kinase family. Homodimer; homodimerizes via its transmembrane region. Interacts with COQ6 and COQ7. Interacts with the multi-subunit COQ enzyme complex, composed of at least COQ3, COQ4, COQ5, COQ6, COQ7 and COQ9. In terms of tissue distribution, in the kidney, expressed in glomeruli, predominantly in podocyte foot precesses, as well as in proximal tubules and collecting ducts (at protein level).

It localises to the mitochondrion membrane. Its subcellular location is the cytoplasm. It is found in the cytosol. The protein resides in the cell membrane. It functions in the pathway cofactor biosynthesis; ubiquinone biosynthesis. Its function is as follows. Atypical kinase involved in the biosynthesis of coenzyme Q, also named ubiquinone, an essential lipid-soluble electron transporter for aerobic cellular respiration. Its substrate specificity is still unclear: may act as a protein kinase that mediates phosphorylation of COQ3. According to other reports, acts as a small molecule kinase, possibly a lipid kinase that phosphorylates a prenyl lipid in the ubiquinone biosynthesis pathway, as suggested by its ability to bind coenzyme Q lipid intermediates. However, the small molecule kinase activity was not confirmed by another publication. Required for podocyte migration. The chain is Atypical kinase COQ8B, mitochondrial from Rattus norvegicus (Rat).